Consider the following 216-residue polypeptide: Oligoribonuclease (216 aa).

In terms of domain architecture, Exonuclease spans 6-171 (VVWMDCEMTG…ADIKESIREL (166 aa)). Tyr-128 is a catalytic residue.

It belongs to the oligoribonuclease family.

Its subcellular location is the cytoplasm. Functionally, 3'-to-5' exoribonuclease specific for small oligoribonucleotides. The polypeptide is Oligoribonuclease (Nocardia farcinica (strain IFM 10152)).